The primary structure comprises 635 residues: Phosphatidylserine decarboxylase proenzyme 3 (635 aa).

A disordered region spans residues 1-42 (MGNGNSTETKESRRSKMRKKIQNFRSRRRLSRPGSGSVSGLA). Glycine 2 carries the N-myristoyl glycine lipid modification. Residues 15–31 (SKMRKKIQNFRSRRRLS) are compositionally biased toward basic residues. The 126-residue stretch at 22–147 (QNFRSRRRLS…VVQEPDSTCK (126 aa)) folds into the C2 domain. 2 EF-hand domains span residues 180–210 (AKRI…FGNV) and 211–246 (VAAN…QQEQ). Residues aspartate 188, aspartate 190, aspartate 192, lysine 194, glutamate 199, aspartate 224, asparagine 226, aspartate 228, and glutamate 235 each contribute to the Ca(2+) site. Catalysis depends on charge relay system; for autoendoproteolytic cleavage activity residues aspartate 442, histidine 498, and serine 586. Serine 586 functions as the Schiff-base intermediate with substrate; via pyruvic acid; for decarboxylase activity in the catalytic mechanism. Pyruvic acid (Ser); by autocatalysis is present on serine 586.

It belongs to the phosphatidylserine decarboxylase family. PSD-B subfamily. Eukaryotic type II sub-subfamily. As to quaternary structure, heterodimer of a large membrane-associated beta subunit and a small pyruvoyl-containing alpha subunit. It depends on pyruvate as a cofactor. In terms of processing, is synthesized initially as an inactive proenzyme. Formation of the active enzyme involves a self-maturation process in which the active site pyruvoyl group is generated from an internal serine residue via an autocatalytic post-translational modification. Two non-identical subunits are generated from the proenzyme in this reaction, and the pyruvate is formed at the N-terminus of the alpha chain, which is derived from the carboxyl end of the proenzyme. The autoendoproteolytic cleavage occurs by a canonical serine protease mechanism, in which the side chain hydroxyl group of the serine supplies its oxygen atom to form the C-terminus of the beta chain, while the remainder of the serine residue undergoes an oxidative deamination to produce ammonia and the pyruvoyl prosthetic group on the alpha chain. During this reaction, the Ser that is part of the protease active site of the proenzyme becomes the pyruvoyl prosthetic group, which constitutes an essential element of the active site of the mature decarboxylase. In terms of tissue distribution, expressed in roots, leaves, stems and flowers.

It is found in the endoplasmic reticulum membrane. It catalyses the reaction a 1,2-diacyl-sn-glycero-3-phospho-L-serine + H(+) = a 1,2-diacyl-sn-glycero-3-phosphoethanolamine + CO2. Its pathway is phospholipid metabolism; phosphatidylethanolamine biosynthesis; phosphatidylethanolamine from CDP-diacylglycerol: step 2/2. In terms of biological role, catalyzes the formation of phosphatidylethanolamine (PtdEtn) from phosphatidylserine (PtdSer). Plays a central role in phospholipid metabolism and in the interorganelle trafficking of phosphatidylserine. Contributes only to a minor proportion of PtdEtn production. This is Phosphatidylserine decarboxylase proenzyme 3 (PSD3) from Arabidopsis thaliana (Mouse-ear cress).